Consider the following 1410-residue polypeptide: Non-secreted LysM effector LysM15 (1410 aa).

LysM domains lie at 1179–1225 (TTYT…DICM) and 1231–1277 (TQYT…EILG). The span at 1291-1303 (TTGDGITTTPGNG) shows a compositional bias: low complexity. Positions 1291–1317 (TTGDGITTTPGNGEYAQGVVSPPENST) are disordered. The region spanning 1328–1375 (RWYSATADDLCVQICLKSGVSAKLFKAANPSLAADCDNSLIAGDAYCV) is the LysM 3 domain.

The protein belongs to the secreted LysM effector family.

Non-secreted LysM effector that might be involved in manipulation of host defenses for successful infection. The polypeptide is Non-secreted LysM effector LysM15 (Penicillium expansum (Blue mold rot fungus)).